We begin with the raw amino-acid sequence, 103 residues long: Large ribosomal subunit protein bL21 (103 aa).

This sequence belongs to the bacterial ribosomal protein bL21 family. As to quaternary structure, part of the 50S ribosomal subunit. Contacts protein L20.

Functionally, this protein binds to 23S rRNA in the presence of protein L20. The sequence is that of Large ribosomal subunit protein bL21 from Cupriavidus metallidurans (strain ATCC 43123 / DSM 2839 / NBRC 102507 / CH34) (Ralstonia metallidurans).